A 548-amino-acid polypeptide reads, in one-letter code: Chaperonin GroEL (548 aa).

ATP is bound by residues 30 to 33 (TLGP), K51, 87 to 91 (DGTTT), G415, and D495.

The protein belongs to the chaperonin (HSP60) family. Forms a cylinder of 14 subunits composed of two heptameric rings stacked back-to-back. Interacts with the co-chaperonin GroES.

The protein resides in the cytoplasm. It catalyses the reaction ATP + H2O + a folded polypeptide = ADP + phosphate + an unfolded polypeptide.. In terms of biological role, together with its co-chaperonin GroES, plays an essential role in assisting protein folding. The GroEL-GroES system forms a nano-cage that allows encapsulation of the non-native substrate proteins and provides a physical environment optimized to promote and accelerate protein folding. The sequence is that of Chaperonin GroEL from Pseudoalteromonas atlantica (strain T6c / ATCC BAA-1087).